A 132-amino-acid polypeptide reads, in one-letter code: ATP synthase epsilon chain (132 aa).

It belongs to the ATPase epsilon chain family. F-type ATPases have 2 components, CF(1) - the catalytic core - and CF(0) - the membrane proton channel. CF(1) has five subunits: alpha(3), beta(3), gamma(1), delta(1), epsilon(1). CF(0) has three main subunits: a, b and c.

Its subcellular location is the cell inner membrane. In terms of biological role, produces ATP from ADP in the presence of a proton gradient across the membrane. The chain is ATP synthase epsilon chain (atpC) from Aquifex aeolicus (strain VF5).